The following is a 301-amino-acid chain: Ribosomal RNA small subunit methyltransferase A (301 aa).

S-adenosyl-L-methionine contacts are provided by N29, L31, G56, E77, D102, and N127.

Belongs to the class I-like SAM-binding methyltransferase superfamily. rRNA adenine N(6)-methyltransferase family. RsmA subfamily.

It is found in the cytoplasm. It catalyses the reaction adenosine(1518)/adenosine(1519) in 16S rRNA + 4 S-adenosyl-L-methionine = N(6)-dimethyladenosine(1518)/N(6)-dimethyladenosine(1519) in 16S rRNA + 4 S-adenosyl-L-homocysteine + 4 H(+). In terms of biological role, specifically dimethylates two adjacent adenosines (A1518 and A1519) in the loop of a conserved hairpin near the 3'-end of 16S rRNA in the 30S particle. May play a critical role in biogenesis of 30S subunits. This chain is Ribosomal RNA small subunit methyltransferase A, found in Halothermothrix orenii (strain H 168 / OCM 544 / DSM 9562).